We begin with the raw amino-acid sequence, 69 residues long: Conotoxin SIVA (69 aa).

The first 21 residues, 1–21, serve as a signal peptide directing secretion; sequence MGMRMMFTVFLLVVLATTVVS. Residues 22–38 constitute a propeptide that is removed on maturation; it reads TPSDRASDGRNAAVHER. At Gln-39 the chain carries Pyrrolidone carboxylic acid. Ser-45 is a glycosylation site (O-linked (HexNAc...) serine). 3 positions are modified to 4-hydroxyproline: Pro-55, Pro-60, and Pro-61. Cys-68 carries the cysteine amide modification.

Belongs to the conotoxin A superfamily. Post-translationally, contains 3 disulfide bonds. O-linked glycan consists of Hex3-HexNAc2 pentasaccharide. As to expression, expressed by the venom duct.

It localises to the secreted. In terms of biological role, neurotoxin with probable activity on sodium channel. Induces intense repetitive firing of the frog neuromuscular junction, leading to a tetanic contracture in muscle fiber (spastic paralysis). In vivo, shows the same effect as the whole venom when injected on fish. Intraperitoneal injection into fish induces a period of rapid swimming followed by a spastic paralysis with stiff fibrillating fins. At high doses, the peptide is lethal to both fish and mice. This Conus striatus (Striated cone) protein is Conotoxin SIVA.